The following is a 471-amino-acid chain: Ribulose bisphosphate carboxylase large chain (471 aa).

Substrate is bound by residues Asn-119 and Thr-169. Residue Lys-171 is the Proton acceptor of the active site. Lys-173 is a binding site for substrate. Residues Lys-197, Asp-199, and Glu-200 each coordinate Mg(2+). The residue at position 197 (Lys-197) is an N6-carboxylysine. His-290 acts as the Proton acceptor in catalysis. Substrate-binding residues include Arg-291, His-323, and Ser-375.

It belongs to the RuBisCO large chain family. Type I subfamily. Heterohexadecamer of 8 large chains and 8 small chains; disulfide-linked. The disulfide link is formed within the large subunit homodimers. The cofactor is Mg(2+). In terms of processing, the disulfide bond which can form in the large chain dimeric partners within the hexadecamer appears to be associated with oxidative stress and protein turnover.

It localises to the carboxysome. It carries out the reaction 2 (2R)-3-phosphoglycerate + 2 H(+) = D-ribulose 1,5-bisphosphate + CO2 + H2O. The catalysed reaction is D-ribulose 1,5-bisphosphate + O2 = 2-phosphoglycolate + (2R)-3-phosphoglycerate + 2 H(+). RuBisCO catalyzes two reactions: the carboxylation of D-ribulose 1,5-bisphosphate, the primary event in carbon dioxide fixation, as well as the oxidative fragmentation of the pentose substrate in the photorespiration process. Both reactions occur simultaneously and in competition at the same active site. This is Ribulose bisphosphate carboxylase large chain from Microcystis aeruginosa (strain NIES-843 / IAM M-2473).